Reading from the N-terminus, the 81-residue chain is Small ribosomal subunit protein bS18 (81 aa).

Belongs to the bacterial ribosomal protein bS18 family. As to quaternary structure, part of the 30S ribosomal subunit. Forms a tight heterodimer with protein bS6.

Binds as a heterodimer with protein bS6 to the central domain of the 16S rRNA, where it helps stabilize the platform of the 30S subunit. The protein is Small ribosomal subunit protein bS18 of Syntrophobacter fumaroxidans (strain DSM 10017 / MPOB).